The following is a 481-amino-acid chain: Pentatricopeptide repeat-containing protein 8, mitochondrial (481 aa).

Residues 1 to 55 (MQGFGSQIFRKLLRSSNAKVSDALLQNTRTLFTAPPLHSGLQTSFTAETQQHVRQ) constitute a mitochondrion transit peptide. PPR repeat units follow at residues 137-172 (SARFWRIMLQSYIDLNLFDKASLIADMSLSHMEFLP) and 365-399 (SISTANTLFSIASRLKDVKWLSAGFDMIDKYGLKP).

Its subcellular location is the mitochondrion. Functionally, mitochondrial RNA-binding protein involved in mitochondrial translation. The cox1 mRNA is one target but it is not clear if ppr8 has a single or multiple targets. The polypeptide is Pentatricopeptide repeat-containing protein 8, mitochondrial (ppr8) (Schizosaccharomyces pombe (strain 972 / ATCC 24843) (Fission yeast)).